A 330-amino-acid polypeptide reads, in one-letter code: Diacylglycerol kinase (330 aa).

A DAGKc domain is found at 1–132; the sequence is MRKCARIIYN…VDIGKMNNRY (132 aa). Residues 10–14, Thr41, 67–73, and Thr94 each bind ATP; these read NPTSG and GDGTLNE. Mg(2+) is bound by residues Lys213, Asp216, and His218. The active-site Proton acceptor is the Glu273.

The protein belongs to the diacylglycerol/lipid kinase family. In terms of assembly, homodimer. Mg(2+) serves as cofactor.

The enzyme catalyses a 1,2-diacyl-sn-glycerol + ATP = a 1,2-diacyl-sn-glycero-3-phosphate + ADP + H(+). Functionally, catalyzes the phosphorylation of diacylglycerol (DAG) into phosphatidic acid. Is a key enzyme involved in the production of lipoteichoic acid by reintroducing DAG formed from the breakdown of membrane phospholipids into the phosphatidylglycerol biosynthetic pathway. This is Diacylglycerol kinase (dagK) from Staphylococcus haemolyticus (strain JCSC1435).